Consider the following 323-residue polypeptide: Tetraacyldisaccharide 4'-kinase (323 aa).

56–63 contacts ATP; it reads TVGGVGKT.

The protein belongs to the LpxK family.

It carries out the reaction a lipid A disaccharide + ATP = a lipid IVA + ADP + H(+). Its pathway is glycolipid biosynthesis; lipid IV(A) biosynthesis; lipid IV(A) from (3R)-3-hydroxytetradecanoyl-[acyl-carrier-protein] and UDP-N-acetyl-alpha-D-glucosamine: step 6/6. Its function is as follows. Transfers the gamma-phosphate of ATP to the 4'-position of a tetraacyldisaccharide 1-phosphate intermediate (termed DS-1-P) to form tetraacyldisaccharide 1,4'-bis-phosphate (lipid IVA). In Legionella pneumophila (strain Lens), this protein is Tetraacyldisaccharide 4'-kinase.